The primary structure comprises 930 residues: SCY1-like protein 2 (930 aa).

The Protein kinase domain occupies 32–327; sequence FDVGRHIASG…ADQMTKIPFF (296 aa). One copy of the HEAT repeat lies at 443–479; the sequence is DEIKNSVLPMVYRALEAPSIQIQELCLNIIPTFANLI. Residues serine 658 and serine 677 each carry the phosphoserine modification. Positions 658–706 are disordered; it reads SGSESENREDGMQGKQKRGSLTLEEKQKLAKEQEQAQKLKSQQPLKPQV. A compositionally biased stretch (basic and acidic residues) spans 680–694; it reads LEEKQKLAKEQEQAQ. Positions 695-705 are enriched in low complexity; that stretch reads KLKSQQPLKPQ. Threonine 708 is subject to Phosphothreonine. The tract at residues 895 to 930 is disordered; sequence GMQGNPFFNPQNFAQPPPTTMTSSSSASNDLKDLFG. Positions 897–922 are enriched in low complexity; the sequence is QGNPFFNPQNFAQPPPTTMTSSSSAS.

The protein belongs to the protein kinase superfamily. Interacts with clathrin and AP2B1; the interaction mediates the association with the AP-2 complex. Post-translationally, could autophosphorylate in presence of poly-L-lysine. In terms of tissue distribution, ubiquitously expressed.

The protein resides in the cytoplasmic vesicle. The protein localises to the clathrin-coated vesicle. It localises to the golgi apparatus. It is found in the trans-Golgi network membrane. Its subcellular location is the endosome membrane. Functionally, component of the AP2-containing clathrin coat that may regulate clathrin-dependent trafficking at plasma membrane, TGN and endosomal system. A possible serine/threonine-protein kinase toward the beta2-subunit of the plasma membrane adapter complex AP2 and other proteins in presence of poly-L-lysine has not been confirmed. By regulating the expression of excitatory receptors at synapses, plays an essential role in neuronal function and signaling and in brain development. This chain is SCY1-like protein 2, found in Mus musculus (Mouse).